A 156-amino-acid chain; its full sequence is Protein-export protein SecB (156 aa).

The protein belongs to the SecB family. In terms of assembly, homotetramer, a dimer of dimers. One homotetramer interacts with 1 SecA dimer.

Its subcellular location is the cytoplasm. Functionally, one of the proteins required for the normal export of preproteins out of the cell cytoplasm. It is a molecular chaperone that binds to a subset of precursor proteins, maintaining them in a translocation-competent state. It also specifically binds to its receptor SecA. This Paraburkholderia phymatum (strain DSM 17167 / CIP 108236 / LMG 21445 / STM815) (Burkholderia phymatum) protein is Protein-export protein SecB.